The sequence spans 128 residues: MAGRTTRKRRVKKNIESGVAHIHSTFNNTIVMITDAQGNAVAWSSAGALGFKGSRKSTPFAAQMAAEAAAKSAMEINMRTVAVTVKGPGSGRESAIRALAAAGLEVTSIKDVTPVPHNGSRPPKRRRV.

Belongs to the universal ribosomal protein uS11 family. Part of the 30S ribosomal subunit. Interacts with proteins S7 and S18. Binds to IF-3.

Located on the platform of the 30S subunit, it bridges several disparate RNA helices of the 16S rRNA. Forms part of the Shine-Dalgarno cleft in the 70S ribosome. The polypeptide is Small ribosomal subunit protein uS11 (Leuconostoc mesenteroides subsp. mesenteroides (strain ATCC 8293 / DSM 20343 / BCRC 11652 / CCM 1803 / JCM 6124 / NCDO 523 / NBRC 100496 / NCIMB 8023 / NCTC 12954 / NRRL B-1118 / 37Y)).